The primary structure comprises 907 residues: Protein translocase subunit SecA (907 aa).

Residues Gln87, 105 to 109, and Asp512 contribute to the ATP site; that span reads GEGKT. Zn(2+) contacts are provided by Cys891, Cys893, Cys902, and His903.

Belongs to the SecA family. In terms of assembly, monomer and homodimer. Part of the essential Sec protein translocation apparatus which comprises SecA, SecYEG and auxiliary proteins SecDF-YajC and YidC. Requires Zn(2+) as cofactor.

It localises to the cell inner membrane. The protein localises to the cytoplasm. The enzyme catalyses ATP + H2O + cellular proteinSide 1 = ADP + phosphate + cellular proteinSide 2.. Part of the Sec protein translocase complex. Interacts with the SecYEG preprotein conducting channel. Has a central role in coupling the hydrolysis of ATP to the transfer of proteins into and across the cell membrane, serving both as a receptor for the preprotein-SecB complex and as an ATP-driven molecular motor driving the stepwise translocation of polypeptide chains across the membrane. The sequence is that of Protein translocase subunit SecA from Shewanella loihica (strain ATCC BAA-1088 / PV-4).